The primary structure comprises 56 residues: Large ribosomal subunit protein bL32 (56 aa).

Basic residues predominate over residues 1–16 (MAVQKSKKSRSMRGMR). The disordered stretch occupies residues 1–21 (MAVQKSKKSRSMRGMRRSHDA).

The protein belongs to the bacterial ribosomal protein bL32 family.

This is Large ribosomal subunit protein bL32 from Vibrio atlanticus (strain LGP32) (Vibrio splendidus (strain Mel32)).